A 364-amino-acid chain; its full sequence is Methylthioribose-1-phosphate isomerase (364 aa).

Substrate contacts are provided by residues 49–51, arginine 89, and glutamine 201; that span reads RGA. The active-site Proton donor is aspartate 242. Position 252–253 (252–253) interacts with substrate; the sequence is NK.

Belongs to the eIF-2B alpha/beta/delta subunits family. MtnA subfamily.

The catalysed reaction is 5-(methylsulfanyl)-alpha-D-ribose 1-phosphate = 5-(methylsulfanyl)-D-ribulose 1-phosphate. It participates in amino-acid biosynthesis; L-methionine biosynthesis via salvage pathway; L-methionine from S-methyl-5-thio-alpha-D-ribose 1-phosphate: step 1/6. Its function is as follows. Catalyzes the interconversion of methylthioribose-1-phosphate (MTR-1-P) into methylthioribulose-1-phosphate (MTRu-1-P). The polypeptide is Methylthioribose-1-phosphate isomerase (Leptospira interrogans serogroup Icterohaemorrhagiae serovar copenhageni (strain Fiocruz L1-130)).